Consider the following 215-residue polypeptide: Ribosomal RNA small subunit methyltransferase G (215 aa).

Residues G78, L83, 128-129 (AE), and R146 contribute to the S-adenosyl-L-methionine site.

It belongs to the methyltransferase superfamily. RNA methyltransferase RsmG family.

Its subcellular location is the cytoplasm. It carries out the reaction guanosine(527) in 16S rRNA + S-adenosyl-L-methionine = N(7)-methylguanosine(527) in 16S rRNA + S-adenosyl-L-homocysteine. Its function is as follows. Specifically methylates the N7 position of guanine in position 527 of 16S rRNA. The polypeptide is Ribosomal RNA small subunit methyltransferase G (Anaeromyxobacter sp. (strain Fw109-5)).